A 241-amino-acid chain; its full sequence is Tryptophan synthase alpha chain (241 aa).

Catalysis depends on proton acceptor residues glutamate 31 and aspartate 42.

This sequence belongs to the TrpA family. Tetramer of two alpha and two beta chains.

It catalyses the reaction (1S,2R)-1-C-(indol-3-yl)glycerol 3-phosphate + L-serine = D-glyceraldehyde 3-phosphate + L-tryptophan + H2O. Its pathway is amino-acid biosynthesis; L-tryptophan biosynthesis; L-tryptophan from chorismate: step 5/5. The alpha subunit is responsible for the aldol cleavage of indoleglycerol phosphate to indole and glyceraldehyde 3-phosphate. The polypeptide is Tryptophan synthase alpha chain (Staphylococcus saprophyticus subsp. saprophyticus (strain ATCC 15305 / DSM 20229 / NCIMB 8711 / NCTC 7292 / S-41)).